Reading from the N-terminus, the 257-residue chain is Probable enoyl-CoA hydratase (257 aa).

The protein belongs to the enoyl-CoA hydratase/isomerase family.

It catalyses the reaction a (3S)-3-hydroxyacyl-CoA = a (2E)-enoyl-CoA + H2O. The catalysed reaction is a 4-saturated-(3S)-3-hydroxyacyl-CoA = a (3E)-enoyl-CoA + H2O. Its function is as follows. Could possibly oxidize fatty acids using specific components. This Rhizobium meliloti (strain 1021) (Ensifer meliloti) protein is Probable enoyl-CoA hydratase (fadB1).